A 389-amino-acid polypeptide reads, in one-letter code: Gustatory receptor 68a (389 aa).

The Cytoplasmic segment spans residues 1-42 (MKIYQDIYPISKPSQIFAILPFYSGDVDDGFRFGGLGRWYGR). Residues 43–63 (LVALIILIGSLTLGEDVLFAS) traverse the membrane as a helical segment. The Extracellular portion of the chain corresponds to 64–82 (KEYRLVASAQGDTEEINRT). Residue N80 is glycosylated (N-linked (GlcNAc...) asparagine). The helical transmembrane segment at 83–103 (IETLLCIISYTMVVLSSVQNA) threads the bilayer. At 104-133 (SRHFRTLHDIAKIDEYLLANGFRETYSCRN) the chain is on the cytoplasmic side. A helical membrane pass occupies residues 134-154 (LTILVTSAAGGVLAVAFYYIH). Residues 155 to 164 (YRSGIGAKRQ) are Extracellular-facing. A helical membrane pass occupies residues 165–185 (IILLLIYFLQLLYSTLLALYL). The Cytoplasmic segment spans residues 186–236 (RTLMMNLAQRIGFLNQKLDTFNLQDCGHMENWRELSNLIEVLCKFRYITEN). A helical transmembrane segment spans residues 237-257 (INCVAGVSLLFYFGFSFYTVT). The N-linked (GlcNAc...) asparagine glycan is linked to N258. At 258–281 (NQSYLAFATLTAGSLSSKTEVADT) the chain is on the extracellular side. Residues 282 to 302 (IGLSCIWVLAETITMIVICSA) form a helical membrane-spanning segment. Topologically, residues 303–352 (CDGLASEVNGTAQILARIYGKSKQFQNLIDKFLTKSIKQDLQFTAYGFFS) are cytoplasmic. The chain crosses the membrane as a helical span at residues 353–373 (IDNSTLFKIFSAVTTYLVILI). At 374 to 389 (QFKQLEDSKVEDISQA) the chain is on the extracellular side.

Belongs to the insect chemoreceptor superfamily. Gustatory receptor (GR) family. Gr21a subfamily. In terms of tissue distribution, expressed in chemosensory neurons of about 20 male-specific gustatory bristles in the forelegs. No expression is seen in the mechanosensory neurons. In larvae, expressed in the ventral pharyngeal sense organ.

It is found in the cell membrane. Its function is as follows. Dsx-dependent essential component of pheromone-driven courtship behavior. Recognizes a female pheromone involved in the second step (tapping step) of the courtship display which is essential for efficient execution of the entire courtship sequence and timely mating. Required for detection of the male sex pheromone CH503 which is transferred from males to females during mating and inhibits courtship behavior by other males. Gr68a-expressing neurons in the male foreleg relay signals to the suboesophageal zone (SEZ) and courtship suppression is mediated by the release of the neuropeptide tachykinin from a cluster of 8-10 neurons in the SEZ. This Drosophila melanogaster (Fruit fly) protein is Gustatory receptor 68a (Gr68a).